Reading from the N-terminus, the 201-residue chain is Probable nicotinate-nucleotide adenylyltransferase (201 aa).

It belongs to the NadD family.

It carries out the reaction nicotinate beta-D-ribonucleotide + ATP + H(+) = deamido-NAD(+) + diphosphate. The protein operates within cofactor biosynthesis; NAD(+) biosynthesis; deamido-NAD(+) from nicotinate D-ribonucleotide: step 1/1. Catalyzes the reversible adenylation of nicotinate mononucleotide (NaMN) to nicotinic acid adenine dinucleotide (NaAD). In Clostridium botulinum (strain Kyoto / Type A2), this protein is Probable nicotinate-nucleotide adenylyltransferase.